The sequence spans 324 residues: 3'-5' exoribonuclease YhaM (324 aa).

In terms of domain architecture, HD spans 163 to 279 (HVVSMLELAK…LHYIDNLDAK (117 aa)).

This sequence belongs to the YhaM family.

In terms of biological role, shows a 3'-5' exoribonuclease activity. This chain is 3'-5' exoribonuclease YhaM, found in Geobacillus sp. (strain WCH70).